The primary structure comprises 462 residues: ATP synthase subunit beta 1 (462 aa).

151–158 is an ATP binding site; sequence GGAGVGKT.

It belongs to the ATPase alpha/beta chains family. In terms of assembly, F-type ATPases have 2 components, CF(1) - the catalytic core - and CF(0) - the membrane proton channel. CF(1) has five subunits: alpha(3), beta(3), gamma(1), delta(1), epsilon(1). CF(0) has four main subunits: a(1), b(1), b'(1) and c(9-12).

It is found in the cell inner membrane. The enzyme catalyses ATP + H2O + 4 H(+)(in) = ADP + phosphate + 5 H(+)(out). Functionally, produces ATP from ADP in the presence of a proton gradient across the membrane. The catalytic sites are hosted primarily by the beta subunits. The sequence is that of ATP synthase subunit beta 1 from Chlorobium luteolum (strain DSM 273 / BCRC 81028 / 2530) (Pelodictyon luteolum).